A 359-amino-acid polypeptide reads, in one-letter code: Ribosome biogenesis protein BRX1 homolog (359 aa).

The segment covering 1–12 (MGRKFQNKKKKA) has biased composition (basic residues). Residues 1–42 (MGRKFQNKKKKAAPQLEIVPLDENPPLPPQRSSDDVVPKKAR) form a disordered region. Residues 50 to 241 (QRVLVFSARG…PVKIFDGSFT (192 aa)) form the Brix domain.

It belongs to the BRX1 family.

It is found in the nucleus. It localises to the nucleolus. Its function is as follows. Required for biogenesis of the 60S ribosomal subunit. The chain is Ribosome biogenesis protein BRX1 homolog from Drosophila melanogaster (Fruit fly).